The primary structure comprises 987 residues: Valine--tRNA ligase (987 aa).

The 'HIGH' region signature appears at 45 to 55 (PNVTGSLHMGH). The 'KMSKS' region motif lies at 634-638 (KMSKS). Lysine 637 provides a ligand contact to ATP. Positions 917–985 (VIDIGAEKAR…LSAALARLSE (69 aa)) form a coiled coil.

It belongs to the class-I aminoacyl-tRNA synthetase family. ValS type 1 subfamily. Monomer.

The protein resides in the cytoplasm. The catalysed reaction is tRNA(Val) + L-valine + ATP = L-valyl-tRNA(Val) + AMP + diphosphate. Its function is as follows. Catalyzes the attachment of valine to tRNA(Val). As ValRS can inadvertently accommodate and process structurally similar amino acids such as threonine, to avoid such errors, it has a 'posttransfer' editing activity that hydrolyzes mischarged Thr-tRNA(Val) in a tRNA-dependent manner. This is Valine--tRNA ligase from Cereibacter sphaeroides (strain ATCC 17023 / DSM 158 / JCM 6121 / CCUG 31486 / LMG 2827 / NBRC 12203 / NCIMB 8253 / ATH 2.4.1.) (Rhodobacter sphaeroides).